A 136-amino-acid chain; its full sequence is Early E3 15.3 kDa protein (136 aa).

The protein belongs to the adenoviridae E3_15 family.

In terms of biological role, protects virus-infected cells from TNF-induced cytolysis. The sequence is that of Early E3 15.3 kDa protein from Human adenovirus B serotype 3 (HAdV-3).